Consider the following 137-residue polypeptide: S-adenosylmethionine decarboxylase proenzyme (137 aa).

The Schiff-base intermediate with substrate; via pyruvic acid role is filled by Ser-63. Position 63 is a pyruvic acid (Ser); by autocatalysis (Ser-63). The Proton acceptor; for processing activity role is filled by His-68. Cys-83 functions as the Proton donor; for catalytic activity in the catalytic mechanism.

This sequence belongs to the prokaryotic AdoMetDC family. Type 1 subfamily. In terms of assembly, heterotetramer of two alpha and two beta chains arranged as a dimer of alpha/beta heterodimers. The cofactor is pyruvate. In terms of processing, is synthesized initially as an inactive proenzyme. Formation of the active enzyme involves a self-maturation process in which the active site pyruvoyl group is generated from an internal serine residue via an autocatalytic post-translational modification. Two non-identical subunits are generated from the proenzyme in this reaction, and the pyruvate is formed at the N-terminus of the alpha chain, which is derived from the carboxyl end of the proenzyme. The post-translation cleavage follows an unusual pathway, termed non-hydrolytic serinolysis, in which the side chain hydroxyl group of the serine supplies its oxygen atom to form the C-terminus of the beta chain, while the remainder of the serine residue undergoes an oxidative deamination to produce ammonia and the pyruvoyl group blocking the N-terminus of the alpha chain.

The catalysed reaction is S-adenosyl-L-methionine + H(+) = S-adenosyl 3-(methylsulfanyl)propylamine + CO2. It functions in the pathway amine and polyamine biosynthesis; S-adenosylmethioninamine biosynthesis; S-adenosylmethioninamine from S-adenosyl-L-methionine: step 1/1. Catalyzes the decarboxylation of S-adenosylmethionine to S-adenosylmethioninamine (dcAdoMet), the propylamine donor required for the synthesis of the polyamines spermine and spermidine from the diamine putrescine. This is S-adenosylmethionine decarboxylase proenzyme from Fervidobacterium nodosum (strain ATCC 35602 / DSM 5306 / Rt17-B1).